We begin with the raw amino-acid sequence, 146 residues long: 3-hydroxyacyl-[acyl-carrier-protein] dehydratase FabZ (146 aa).

Residue histidine 48 is part of the active site.

It belongs to the thioester dehydratase family. FabZ subfamily.

Its subcellular location is the cytoplasm. The enzyme catalyses a (3R)-hydroxyacyl-[ACP] = a (2E)-enoyl-[ACP] + H2O. Functionally, involved in unsaturated fatty acids biosynthesis. Catalyzes the dehydration of short chain beta-hydroxyacyl-ACPs and long chain saturated and unsaturated beta-hydroxyacyl-ACPs. This Acetivibrio thermocellus (strain ATCC 27405 / DSM 1237 / JCM 9322 / NBRC 103400 / NCIMB 10682 / NRRL B-4536 / VPI 7372) (Clostridium thermocellum) protein is 3-hydroxyacyl-[acyl-carrier-protein] dehydratase FabZ.